A 498-amino-acid polypeptide reads, in one-letter code: Zinc finger protein 497 (498 aa).

The segment at 30 to 104 (SEGAVSGGWG…LRPSPLPEEP (75 aa)) is disordered. C2H2-type zinc fingers lie at residues 106-128 (CRCG…RRVH), 134-156 (YTCP…QRIH), 162-184 (YACR…QETH), 190-212 (FRCP…RRTH), 218-240 (YECP…RRVH), 246-268 (HACR…LKIH), 274-296 (HACP…RRTH), 302-324 (FPCA…QRTH), 330-352 (FECA…RRVH), 358-380 (HACA…RRTH), 386-408 (FACA…RLSH), 414-436 (FACA…QRLH), 442-464 (FVCA…RRTH), and 470-492 (YACG…QKRH).

This sequence belongs to the krueppel C2H2-type zinc-finger protein family.

Its subcellular location is the nucleus. Functionally, may be involved in transcriptional regulation. In Homo sapiens (Human), this protein is Zinc finger protein 497 (ZNF497).